A 170-amino-acid chain; its full sequence is Urease accessory protein UreE (170 aa).

Residues 144-170 (GGHSHDDHDHHHGHHEHDHEHHHHHHD) form a disordered region. The segment covering 146-162 (HSHDDHDHHHGHHEHDH) has biased composition (basic and acidic residues).

It belongs to the UreE family.

Its subcellular location is the cytoplasm. Functionally, involved in urease metallocenter assembly. Binds nickel. Probably functions as a nickel donor during metallocenter assembly. This is Urease accessory protein UreE from Brucella anthropi (strain ATCC 49188 / DSM 6882 / CCUG 24695 / JCM 21032 / LMG 3331 / NBRC 15819 / NCTC 12168 / Alc 37) (Ochrobactrum anthropi).